Consider the following 218-residue polypeptide: Pyridoxal phosphate homeostasis protein (218 aa).

The residue at position 25 (lysine 25) is an N6-(pyridoxal phosphate)lysine.

The protein belongs to the pyridoxal phosphate-binding protein YggS/PROSC family.

Functionally, pyridoxal 5'-phosphate (PLP)-binding protein, which is involved in PLP homeostasis. This is Pyridoxal phosphate homeostasis protein from Synechocystis sp. (strain ATCC 27184 / PCC 6803 / Kazusa).